A 511-amino-acid polypeptide reads, in one-letter code: Probable cytochrome P450 4ac2 (511 aa).

Positions 318 and 455 each coordinate heme.

This sequence belongs to the cytochrome P450 family. Requires heme as cofactor.

It is found in the endoplasmic reticulum membrane. The protein localises to the microsome membrane. May be involved in the metabolism of insect hormones and in the breakdown of synthetic insecticides. The protein is Probable cytochrome P450 4ac2 (Cyp4ac2) of Drosophila melanogaster (Fruit fly).